The chain runs to 576 residues: TRAF-type zinc finger domain-containing protein 1 (576 aa).

N-acetylalanine is present on Ala2. A TRAF-type zinc finger spans residues 27 to 103 (IHEIHCQRNI…DLELSVVKLK (77 aa)). Ser278, Ser320, Ser326, Ser327, Ser409, Ser415, Ser430, and Ser450 each carry phosphoserine. The tract at residues 402–432 (EGIPTQDSQPEDRSPELSRRRVKHQGDLSSG) is disordered. Basic and acidic residues predominate over residues 411-420 (PEDRSPELSR). 2 disordered regions span residues 465 to 491 (LNSS…GSQD) and 529 to 576 (HGSP…EEEE). Ser531 is modified (phosphoserine). The span at 540-552 (GSRSSRVTPTAAS) shows a compositional bias: polar residues.

Interacts with MAVS, TICAM1, TRAF1, TRAF2, TRAF3 and TRAF6. Expressed in vascular smooth muscle cells.

Negative feedback regulator that controls excessive innate immune responses. Regulates both Toll-like receptor 4 (TLR4) and DDX58/RIG1-like helicases (RLH) pathways. May inhibit the LTR pathway by direct interaction with TRAF6 and attenuation of NF-kappa-B activation. May negatively regulate the RLH pathway downstream from MAVS and upstream of NF-kappa-B and IRF3. The polypeptide is TRAF-type zinc finger domain-containing protein 1 (Trafd1) (Rattus norvegicus (Rat)).